Here is a 547-residue protein sequence, read N- to C-terminus: Chaperonin GroEL (547 aa).

Residues 30–33 (TLGP), Lys-51, 87–91 (DGTTT), Gly-415, 479–481 (NAA), and Asp-495 contribute to the ATP site.

The protein belongs to the chaperonin (HSP60) family. In terms of assembly, forms a cylinder of 14 subunits composed of two heptameric rings stacked back-to-back. Interacts with the co-chaperonin GroES.

It localises to the cytoplasm. It carries out the reaction ATP + H2O + a folded polypeptide = ADP + phosphate + an unfolded polypeptide.. Together with its co-chaperonin GroES, plays an essential role in assisting protein folding. The GroEL-GroES system forms a nano-cage that allows encapsulation of the non-native substrate proteins and provides a physical environment optimized to promote and accelerate protein folding. The sequence is that of Chaperonin GroEL from Marinomonas sp. (strain MWYL1).